The following is a 70-amino-acid chain: NADH dehydrogenase [ubiquinone] 1 alpha subcomplex subunit 1 (70 aa).

A helical membrane pass occupies residues 1-21; that stretch reads MWFEILPGLAVMGVCLVIPGV.

Belongs to the complex I NDUFA1 subunit family. In terms of assembly, complex I is composed of 45 different subunits.

Its subcellular location is the mitochondrion inner membrane. Functionally, accessory subunit of the mitochondrial membrane respiratory chain NADH dehydrogenase (Complex I), that is believed not to be involved in catalysis. Complex I functions in the transfer of electrons from NADH to the respiratory chain. The immediate electron acceptor for the enzyme is believed to be ubiquinone. This is NADH dehydrogenase [ubiquinone] 1 alpha subcomplex subunit 1 (NDUFA1) from Cricetulus griseus (Chinese hamster).